A 115-amino-acid polypeptide reads, in one-letter code: Large ribosomal subunit protein bL19 (115 aa).

Belongs to the bacterial ribosomal protein bL19 family.

In terms of biological role, this protein is located at the 30S-50S ribosomal subunit interface and may play a role in the structure and function of the aminoacyl-tRNA binding site. The sequence is that of Large ribosomal subunit protein bL19 from Buchnera aphidicola subsp. Schizaphis graminum (strain Sg).